The following is a 203-amino-acid chain: MIVSLRGTVESIGLGSAVIECNGVGYEVLAAPTTLGRLTRGEQARVLTTMVVREESQTLYGFTDDASRRMFVLLQSVSGLGPKLALAAQSVFTTEDIARHIAGGDAKALQKIPGVGKRMAERMIVDLKDKVVGFNDGIPAAAQPQLSIAVDQAVQEQVLEALVGLGFSEKIALPVLSRVLRDSPELSKSQALRAALSELGTKN.

The segment at 1 to 63 is domain I; it reads MIVSLRGTVE…EESQTLYGFT (63 aa). A domain II region spans residues 64–142; sequence DDASRRMFVL…GFNDGIPAAA (79 aa). Positions 143–150 are flexible linker; the sequence is QPQLSIAV. Residues 150–203 are domain III; sequence VDQAVQEQVLEALVGLGFSEKIALPVLSRVLRDSPELSKSQALRAALSELGTKN.

Belongs to the RuvA family. As to quaternary structure, homotetramer. Forms an RuvA(8)-RuvB(12)-Holliday junction (HJ) complex. HJ DNA is sandwiched between 2 RuvA tetramers; dsDNA enters through RuvA and exits via RuvB. An RuvB hexamer assembles on each DNA strand where it exits the tetramer. Each RuvB hexamer is contacted by two RuvA subunits (via domain III) on 2 adjacent RuvB subunits; this complex drives branch migration. In the full resolvosome a probable DNA-RuvA(4)-RuvB(12)-RuvC(2) complex forms which resolves the HJ.

The protein resides in the cytoplasm. Its function is as follows. The RuvA-RuvB-RuvC complex processes Holliday junction (HJ) DNA during genetic recombination and DNA repair, while the RuvA-RuvB complex plays an important role in the rescue of blocked DNA replication forks via replication fork reversal (RFR). RuvA specifically binds to HJ cruciform DNA, conferring on it an open structure. The RuvB hexamer acts as an ATP-dependent pump, pulling dsDNA into and through the RuvAB complex. HJ branch migration allows RuvC to scan DNA until it finds its consensus sequence, where it cleaves and resolves the cruciform DNA. This is Holliday junction branch migration complex subunit RuvA from Corynebacterium diphtheriae (strain ATCC 700971 / NCTC 13129 / Biotype gravis).